The chain runs to 131 residues: Inactive protein FON2 SPARE1 (131 aa).

The tract at residues S67–H131 is disordered. Residues R76–R97 are compositionally biased toward basic residues.

It belongs to the CLV3/ESR signal peptide family. In terms of tissue distribution, expressed in all aerial apical meristems, including the floral and inflorescence meristems in the reproductive phase and the shoot apical meristem in the vegetative phase. Also detected in the primordia of lateral organs such as the leaf and the floral organs.

Functionally, non functional suppressor of the fon2 mutation. In Oryza sativa subsp. japonica, the protein has a single amino acid substitution at the putative processing site of the signal peptide while in all the other varieties/species of domesticated and wild rice tested the protein is functional. The sequence is that of Inactive protein FON2 SPARE1 (FOS1) from Oryza sativa subsp. japonica (Rice).